The sequence spans 87 residues: Small ribosomal subunit protein bS20 (87 aa).

A compositionally biased stretch (basic residues) spans 1 to 11 (MANIKSKKKRI). Residues 1–25 (MANIKSKKKRIKTNEKARQRNKAIR) form a disordered region.

It belongs to the bacterial ribosomal protein bS20 family.

Its function is as follows. Binds directly to 16S ribosomal RNA. The chain is Small ribosomal subunit protein bS20 from Corynebacterium kroppenstedtii (strain DSM 44385 / JCM 11950 / CIP 105744 / CCUG 35717).